A 644-amino-acid polypeptide reads, in one-letter code: SURP and G-patch domain-containing protein 1 (644 aa).

A compositionally biased stretch (basic and acidic residues) spans 44-54; that stretch reads REIEARMEQKA. Disordered stretches follow at residues 44–74 and 98–122; these read REIEARMEQKARQSHVASPQPPHPGEVADAQ and AQASTDSAPRAPPSSPAPSSLKRPL. Thr128 bears the Phosphothreonine mark. Residues 188-230 form an SURP motif 1 repeat; sequence VIEKLARFVAEGGPELEKVAMEDYKDNPAFTFLHDKNSREFLY. Ser253 carries the post-translational modification Phosphoserine. An SURP motif 2 repeat occupies 263 to 306; it reads LAEKLARFIADGGPEVETIALQNNRENQAFSFLYDPNSQGYRYY. Disordered stretches follow at residues 316-342 and 360-412; these read AKAGSTGSLPAPVPNPSLRRKSAPEAL and PAVN…PSPL. Ser323 carries the phosphoserine modification. A compositionally biased stretch (pro residues) spans 360 to 369; that stretch reads PAVNPTPSIP. Residues 379-385 carry the Nuclear localization signal motif; it reads KRKRKSR. Phosphoserine occurs at positions 408, 410, 413, and 484. In terms of domain architecture, G-patch spans 561–608; the sequence is VENIGYQMLMKMGWKEGEGLGTEGQGIKNPVNKGATTIDGAGFGIDRP.

Component of the spliceosome.

Its subcellular location is the nucleus. Functionally, plays a role in pre-mRNA splicing. The sequence is that of SURP and G-patch domain-containing protein 1 (Sugp1) from Rattus norvegicus (Rat).